The sequence spans 306 residues: Probable zinc metalloprotease VDBG_06923 (306 aa).

An N-terminal signal peptide occupies residues 1–28 (MNYEAEQPGANDDASGVAVALELARVLA). Zn(2+) contacts are provided by aspartate 12 and glutamate 45. Asparagine 60 carries an N-linked (GlcNAc...) asparagine glycan. Aspartate 72 is a binding site for Zn(2+). Positions 218-306 (APAKVNNVRV…KSPVTIPFPT (89 aa)) constitute a Fibronectin type-III domain. 3 N-linked (GlcNAc...) asparagine glycosylation sites follow: asparagine 228, asparagine 234, and asparagine 244.

It belongs to the peptidase M28 family. M28B subfamily. Requires Zn(2+) as cofactor.

It is found in the secreted. The sequence is that of Probable zinc metalloprotease VDBG_06923 from Verticillium alfalfae (strain VaMs.102 / ATCC MYA-4576 / FGSC 10136) (Verticillium wilt of alfalfa).